A 117-amino-acid polypeptide reads, in one-letter code: Immunoglobulin kappa variable 9-129 (117 aa).

A signal peptide spans 1–22 (MDMRAPAQVFGFLLLWFPGARC). Positions 23–45 (DIQMTQSPSSLSASLGERVSLTC) are framework-1. A disulfide bridge connects residues C45 and C110. A complementarity-determining-1 region spans residues 46–56 (RASQDIHGYLN). The interval 57 to 71 (LFQQKPGETIKHLIY) is framework-2. The complementarity-determining-2 stretch occupies residues 72 to 78 (ETSNLDS). The tract at residues 79-110 (GVPKRFSGSRSGSDYSLIIGSLESEDFADYYC) is framework-3. A complementarity-determining-3 region spans residues 111 to 117 (LQYASSP).

This Mus musculus (Mouse) protein is Immunoglobulin kappa variable 9-129.